The sequence spans 840 residues: Phosphatidylglycerol lysyltransferase (840 aa).

Residues 1–8 are Cytoplasmic-facing; that stretch reads MTEELKNR. The helical transmembrane segment at 9–29 threads the bilayer; sequence LLSILKFVFAAVLFIAVVATL. Topologically, residues 30-52 are extracellular; the sequence is YHELAHINFKQTLEAFSKINRWY. Residues 53–73 traverse the membrane as a helical segment; the sequence is LVGLFICGGSAMILLSLYDLI. At 74-89 the chain is on the cytoplasmic side; that stretch reads LVKGLKLDIPLIRVFK. The helical transmembrane segment at 90–110 threads the bilayer; the sequence is ISYIINALNAIVGFGGFIGAG. Residues 111–129 are Extracellular-facing; the sequence is FRAFIYKNYTTDRKKLVHA. A helical transmembrane segment spans residues 130–150; sequence ISIILISMLMGLSLLSILVVL. Residues 151-167 lie on the Cytoplasmic side of the membrane; the sequence is HIFDASHIINKVSWVRW. The helical transmembrane segment at 168–188 threads the bilayer; sequence ILYVVALFLPLFIAYTMINPI. The Extracellular segment spans residues 189–193; sequence DRNNK. The helical transmembrane segment at 194-216 threads the bilayer; the sequence is YLGVYCTLVSSFEWLAAATVLYL. At 217–229 the chain is on the cytoplasmic side; the sequence is STVIVDINIAFTT. Residues 230–250 traverse the membrane as a helical segment; it reads VIGIFIIAALSGLVSFIPGGF. Residues 251–271 lie on the Extracellular side of the membrane; sequence GAFDLVVLLGLKSLGVPEEKV. The chain crosses the membrane as a helical span at residues 272–292; it reads LLALLLYRFAYYFVPVIIALI. Residues 293 to 335 are Cytoplasmic-facing; it reads LSTFEFGSSARKYFEESKYFVPARDVTSFLFSYQKDIIAKIPS. A helical transmembrane segment spans residues 336–356; sequence FALATLVLITSFVFFINNITI. Over 357 to 366 the chain is Extracellular; it reads VYDGLYDDHH. Residues 367 to 387 form a helical membrane-spanning segment; it reads FAYYIMLSVHTSACLLLLINV. The Cytoplasmic portion of the chain corresponds to 388–394; it reads RGVFKQS. A run of 2 helical transmembrane segments spans residues 395 to 415 and 416 to 436; these read RRAILFVMISLVLIFSATIYT and YASLILLSWILLIFILLILAY. Residues 437–450 lie on the Cytoplasmic side of the membrane; sequence RRSKVMKRPFRLKR. A helical transmembrane segment spans residues 451-471; sequence LIFTIILSMLVLYVNHFIISE. Over 472-490 the chain is Extracellular; that stretch reads TLYALDIYHIEMDTSLLKY. The helical transmembrane segment at 491–511 threads the bilayer; sequence YFWLTILVVVILVGIVAWLLG. The Cytoplasmic portion of the chain corresponds to 512–840; the sequence is SRYTRPHQLE…LKVMRVIRHK (329 aa).

This sequence belongs to the LPG synthase family.

It localises to the cell membrane. It catalyses the reaction L-lysyl-tRNA(Lys) + a 1,2-diacyl-sn-glycero-3-phospho-(1'-sn-glycerol) = a 1,2-diacyl-sn-glycero-3-phospho-1'-(3'-O-L-lysyl)-sn-glycerol + tRNA(Lys). In terms of biological role, catalyzes the transfer of a lysyl group from L-lysyl-tRNA(Lys) to membrane-bound phosphatidylglycerol (PG), which produces lysylphosphatidylglycerol (LPG), a major component of the bacterial membrane with a positive net charge. LPG synthesis contributes to bacterial virulence as it is involved in the resistance mechanism against cationic antimicrobial peptides (CAMP) produces by the host's immune system (defensins, cathelicidins) and by the competing microorganisms (bacteriocins). In fact, the modification of anionic phosphatidylglycerol with positively charged L-lysine results in repulsion of the peptides. This chain is Phosphatidylglycerol lysyltransferase (mprF), found in Staphylococcus haemolyticus (strain JCSC1435).